The chain runs to 104 residues: Elicitor peptide 6 (104 aa).

The propeptide occupies M1 to R81. Low complexity predominate over residues S48–S61. A disordered region spans residues S48 to N104. Positions V63 to E74 are enriched in acidic residues.

The protein belongs to the brassicaceae elicitor peptide family.

Elicitor of plant defense. The chain is Elicitor peptide 6 (PEP6) from Arabidopsis thaliana (Mouse-ear cress).